The chain runs to 419 residues: Fumarylacetoacetase (419 aa).

At serine 2 the chain carries N-acetylserine. Phosphoserine is present on residues serine 84 and serine 92. Aspartate 126 is a Ca(2+) binding site. Position 128 (tyrosine 128) interacts with substrate. The Proton acceptor role is filled by histidine 133. Arginine 142 serves as a coordination point for substrate. Ca(2+)-binding residues include glutamate 199, glutamate 201, and aspartate 233. Aspartate 233 contacts Mg(2+). Residues glutamine 240 and tyrosine 244 each coordinate substrate. 2 residues coordinate Mg(2+): lysine 253 and threonine 257. Serine 309 carries the post-translational modification Phosphoserine. Threonine 350 is a binding site for substrate. The residue at position 417 (serine 417) is a Phosphoserine.

It belongs to the FAH family. Homodimer. It depends on Ca(2+) as a cofactor. Mg(2+) serves as cofactor. As to expression, mainly in liver and kidney.

The catalysed reaction is 4-fumarylacetoacetate + H2O = acetoacetate + fumarate + H(+). Its pathway is amino-acid degradation; L-phenylalanine degradation; acetoacetate and fumarate from L-phenylalanine: step 6/6. The sequence is that of Fumarylacetoacetase (Fah) from Mus musculus (Mouse).